The sequence spans 1075 residues: Carbamoyl phosphate synthase large chain (1075 aa).

Residues 2–403 (PKRTDIKSIL…SLQKALRGLE (402 aa)) are carboxyphosphate synthetic domain. Positions 129, 169, 175, 176, 208, 210, 215, 241, 242, 243, 285, and 299 each coordinate ATP. In terms of domain architecture, ATP-grasp 1 spans 133 to 328 (DIAMKKIGLD…IAKVAAKLAV (196 aa)). Mg(2+) is bound by residues Gln-285, Glu-299, and Asn-301. Residues Gln-285, Glu-299, and Asn-301 each contribute to the Mn(2+) site. Positions 404–553 (VGATGFDPKV…YSTYEDECEA (150 aa)) are oligomerization domain. The interval 554-936 (NPSIDRDKIM…AFAKAQLGSN (383 aa)) is carbamoyl phosphate synthetic domain. An ATP-grasp 2 domain is found at 679 to 870 (QHAVDRLKLK…LAKVAARVMA (192 aa)). The ATP site is built by Arg-715, Arg-754, Leu-756, Glu-761, Gly-786, Val-787, His-788, Ser-789, Gln-829, and Glu-841. Mg(2+) contacts are provided by Gln-829, Glu-841, and Asn-843. Mn(2+) contacts are provided by Gln-829, Glu-841, and Asn-843. One can recognise an MGS-like domain in the interval 937 to 1075 (STMKKQGRAL…QEMHAQIKKS (139 aa)). The allosteric domain stretch occupies residues 937-1075 (STMKKQGRAL…QEMHAQIKKS (139 aa)).

Belongs to the CarB family. As to quaternary structure, composed of two chains; the small (or glutamine) chain promotes the hydrolysis of glutamine to ammonia, which is used by the large (or ammonia) chain to synthesize carbamoyl phosphate. Tetramer of heterodimers (alpha,beta)4. Requires Mg(2+) as cofactor. The cofactor is Mn(2+).

It catalyses the reaction hydrogencarbonate + L-glutamine + 2 ATP + H2O = carbamoyl phosphate + L-glutamate + 2 ADP + phosphate + 2 H(+). The enzyme catalyses hydrogencarbonate + NH4(+) + 2 ATP = carbamoyl phosphate + 2 ADP + phosphate + 2 H(+). It participates in amino-acid biosynthesis; L-arginine biosynthesis; carbamoyl phosphate from bicarbonate: step 1/1. The protein operates within pyrimidine metabolism; UMP biosynthesis via de novo pathway; (S)-dihydroorotate from bicarbonate: step 1/3. Large subunit of the glutamine-dependent carbamoyl phosphate synthetase (CPSase). CPSase catalyzes the formation of carbamoyl phosphate from the ammonia moiety of glutamine, carbonate, and phosphate donated by ATP, constituting the first step of 2 biosynthetic pathways, one leading to arginine and/or urea and the other to pyrimidine nucleotides. The large subunit (synthetase) binds the substrates ammonia (free or transferred from glutamine from the small subunit), hydrogencarbonate and ATP and carries out an ATP-coupled ligase reaction, activating hydrogencarbonate by forming carboxy phosphate which reacts with ammonia to form carbamoyl phosphate. The polypeptide is Carbamoyl phosphate synthase large chain (Salmonella typhimurium (strain LT2 / SGSC1412 / ATCC 700720)).